The sequence spans 64 residues: Large ribosomal subunit protein bL35 (64 aa).

Residues 17–41 are disordered; it reads TGSGKVKRERMNGSHNLEHKNRKRT. The span at 25 to 35 shows a compositional bias: basic and acidic residues; sequence ERMNGSHNLEH.

It belongs to the bacterial ribosomal protein bL35 family.

The chain is Large ribosomal subunit protein bL35 from Chlorobaculum parvum (strain DSM 263 / NCIMB 8327) (Chlorobium vibrioforme subsp. thiosulfatophilum).